A 358-amino-acid chain; its full sequence is Phospho-N-acetylmuramoyl-pentapeptide-transferase (358 aa).

The next 10 helical transmembrane spans lie at 26 to 46, 71 to 91, 93 to 113, 134 to 154, 170 to 190, 197 to 217, 234 to 254, 261 to 281, 286 to 306, and 335 to 355; these read TIYAMITALIVCFVLGPWIIR, TPTMGGLIILTAIILPTLLWA, LTNVYIWLTLFIIVGYGLIGF, MFWQVLLAGGVAVFLYVTPGF, LGIFFIPFVTLVIVGASNAVN, GLAIGPVAINAATYMLFAYVA, AGELAVICGAMVGAGLGFLWF, VFMGDVGSLSLGGTLGVIAVL, ILLVIVGGIFVIEALSVIFQV, and KIIVRFWIITIILALVAISTL.

It belongs to the glycosyltransferase 4 family. MraY subfamily. Requires Mg(2+) as cofactor.

Its subcellular location is the cell inner membrane. The catalysed reaction is UDP-N-acetyl-alpha-D-muramoyl-L-alanyl-gamma-D-glutamyl-meso-2,6-diaminopimeloyl-D-alanyl-D-alanine + di-trans,octa-cis-undecaprenyl phosphate = di-trans,octa-cis-undecaprenyl diphospho-N-acetyl-alpha-D-muramoyl-L-alanyl-D-glutamyl-meso-2,6-diaminopimeloyl-D-alanyl-D-alanine + UMP. It functions in the pathway cell wall biogenesis; peptidoglycan biosynthesis. Functionally, catalyzes the initial step of the lipid cycle reactions in the biosynthesis of the cell wall peptidoglycan: transfers peptidoglycan precursor phospho-MurNAc-pentapeptide from UDP-MurNAc-pentapeptide onto the lipid carrier undecaprenyl phosphate, yielding undecaprenyl-pyrophosphoryl-MurNAc-pentapeptide, known as lipid I. The polypeptide is Phospho-N-acetylmuramoyl-pentapeptide-transferase (Trichlorobacter lovleyi (strain ATCC BAA-1151 / DSM 17278 / SZ) (Geobacter lovleyi)).